Reading from the N-terminus, the 330-residue chain is Succinylglutamate desuccinylase (330 aa).

Zn(2+) contacts are provided by His53, Glu56, and His147. The active site involves Glu210.

It belongs to the AspA/AstE family. Succinylglutamate desuccinylase subfamily. Zn(2+) serves as cofactor.

It carries out the reaction N-succinyl-L-glutamate + H2O = L-glutamate + succinate. It functions in the pathway amino-acid degradation; L-arginine degradation via AST pathway; L-glutamate and succinate from L-arginine: step 5/5. In terms of biological role, transforms N(2)-succinylglutamate into succinate and glutamate. In Yersinia pseudotuberculosis serotype O:3 (strain YPIII), this protein is Succinylglutamate desuccinylase.